The sequence spans 434 residues: GTPase Obg (434 aa).

One can recognise an Obg domain in the interval M1–L158. Residues A159 to D336 enclose the OBG-type G domain. GTP contacts are provided by residues G165 to S172, F190 to V194, D212 to G215, N282 to D285, and S317 to L319. 2 residues coordinate Mg(2+): S172 and T192. An OCT domain is found at G356–D434.

It belongs to the TRAFAC class OBG-HflX-like GTPase superfamily. OBG GTPase family. In terms of assembly, monomer. Mg(2+) is required as a cofactor.

The protein resides in the cytoplasm. Its function is as follows. An essential GTPase which binds GTP, GDP and possibly (p)ppGpp with moderate affinity, with high nucleotide exchange rates and a fairly low GTP hydrolysis rate. Plays a role in control of the cell cycle, stress response, ribosome biogenesis and in those bacteria that undergo differentiation, in morphogenesis control. In Streptococcus pneumoniae serotype 19F (strain G54), this protein is GTPase Obg.